We begin with the raw amino-acid sequence, 212 residues long: Pyridoxine/pyridoxamine 5'-phosphate oxidase (212 aa).

Substrate contacts are provided by residues 8–11 (RREY) and Lys-66. Residues 61 to 66 (RIVLLK), 76 to 77 (FT), Arg-82, Lys-83, and Gln-105 contribute to the FMN site. Substrate-binding residues include Tyr-123, Arg-127, and Ser-131. FMN is bound by residues 140–141 (QS) and Trp-185. Position 191–193 (191–193 (RLH)) interacts with substrate. Arg-195 serves as a coordination point for FMN.

Belongs to the pyridoxamine 5'-phosphate oxidase family. As to quaternary structure, homodimer. The cofactor is FMN.

It catalyses the reaction pyridoxamine 5'-phosphate + O2 + H2O = pyridoxal 5'-phosphate + H2O2 + NH4(+). It carries out the reaction pyridoxine 5'-phosphate + O2 = pyridoxal 5'-phosphate + H2O2. Its pathway is cofactor metabolism; pyridoxal 5'-phosphate salvage; pyridoxal 5'-phosphate from pyridoxamine 5'-phosphate: step 1/1. It functions in the pathway cofactor metabolism; pyridoxal 5'-phosphate salvage; pyridoxal 5'-phosphate from pyridoxine 5'-phosphate: step 1/1. In terms of biological role, catalyzes the oxidation of either pyridoxine 5'-phosphate (PNP) or pyridoxamine 5'-phosphate (PMP) into pyridoxal 5'-phosphate (PLP). This chain is Pyridoxine/pyridoxamine 5'-phosphate oxidase, found in Shewanella frigidimarina (strain NCIMB 400).